The primary structure comprises 310 residues: Proline iminopeptidase (310 aa).

Residues 33 to 290 (PVIFLHGGPG…RVVQAGHRAF (258 aa)) enclose the AB hydrolase-1 domain. The Nucleophile role is filled by serine 107. Aspartate 260 is an active-site residue. The Proton donor role is filled by histidine 287.

This sequence belongs to the peptidase S33 family.

It localises to the cytoplasm. The enzyme catalyses Release of N-terminal proline from a peptide.. In terms of biological role, specifically catalyzes the removal of N-terminal proline residues from peptides. This is Proline iminopeptidase (pip) from Neisseria meningitidis serogroup B (strain ATCC BAA-335 / MC58).